Here is a 207-residue protein sequence, read N- to C-terminus: Proteasome subunit beta 2 (207 aa).

The propeptide at 1–13 (METNNKLKILKTG) is removed in mature form; by autocatalysis. Thr-14 (nucleophile) is an active-site residue.

The protein belongs to the peptidase T1B family. The 20S proteasome core is composed of 14 alpha and 14 beta subunits that assemble into four stacked heptameric rings, resulting in a barrel-shaped structure. The two inner rings, each composed of seven catalytic beta subunits, are sandwiched by two outer rings, each composed of seven alpha subunits. The catalytic chamber with the active sites is on the inside of the barrel. Has a gated structure, the ends of the cylinder being occluded by the N-termini of the alpha-subunits. Is capped at one or both ends by the proteasome regulatory ATPase, PAN.

The protein resides in the cytoplasm. The catalysed reaction is Cleavage of peptide bonds with very broad specificity.. Its activity is regulated as follows. The formation of the proteasomal ATPase PAN-20S proteasome complex, via the docking of the C-termini of PAN into the intersubunit pockets in the alpha-rings, triggers opening of the gate for substrate entry. Interconversion between the open-gate and close-gate conformations leads to a dynamic regulation of the 20S proteasome proteolysis activity. Component of the proteasome core, a large protease complex with broad specificity involved in protein degradation. The sequence is that of Proteasome subunit beta 2 from Sulfurisphaera tokodaii (strain DSM 16993 / JCM 10545 / NBRC 100140 / 7) (Sulfolobus tokodaii).